The sequence spans 930 residues: A disintegrin and metalloproteinase with thrombospondin motifs 5 (930 aa).

The signal sequence occupies residues 1–21 (MRLEWAPLLLLLLLLSASCLS). Positions 22 to 261 (LAADSPAAAP…PQTWWRRRRR (240 aa)) are excised as a propeptide. Positions 31-53 (PAQDKTRQPQAAAAAAEPDQPQG) are enriched in low complexity. Disordered regions lie at residues 31–68 (PAQD…LAGQ) and 207–231 (ASCE…SRRR). The Cysteine switch signature appears at 207–214 (ASCETPAS). Zn(2+) is bound at residue C209. Residues 211–225 (TPASPSGPQESPSVH) are compositionally biased toward polar residues. Residues 267–476 (RQVELLLVAD…GHGNCLLDLP (210 aa)) enclose the Peptidase M12B domain. 8 disulfide bridges follow: C342/C394, C371/C376, C388/C471, C426/C455, C497/C519, C508/C529, C514/C548, and C542/C553. H410 is a binding site for Zn(2+). The active site involves E411. Zn(2+)-binding residues include H414 and H420. The 82-residue stretch at 485–566 (ELPGQTYDAT…TKKKYYSTSS (82 aa)) folds into the Disintegrin domain. N498 is a glycosylation site (N-linked (GlcNAc...) asparagine). Residues 567–622 (HGNWGSWGPWGQCSRSCGGGVQFAYRHCNNPAPRNSGRYCTGKRAIYRSCSVTPCP) enclose the TSP type-1 1 domain. W570 and W573 each carry a C-linked (Man) tryptophan glycan. 3 cysteine pairs are disulfide-bonded: C579/C616, C583/C621, and C594/C606. A glycan (O-linked (Fuc...) serine) is linked at S582. 3 N-linked (GlcNAc...) asparagine glycosylation sites follow: N728, N802, and N807. The segment at 732–874 (TKIIGTFNKK…HGSNKVGPHS (143 aa)) is spacer. The TSP type-1 2 domain occupies 875 to 929 (TQLQWVTGPWLACSRTCDTGWHTRTVQCQDGNRKLAKGCLLSQRPSAFKQCLLKK).

Requires Zn(2+) as cofactor. The precursor is cleaved by furin and PCSK7 outside of the cell. In terms of processing, glycosylated. Can be O-fucosylated by POFUT2 on a serine or a threonine residue found within the consensus sequence C1-X(2)-(S/T)-C2-G of the TSP type-1 repeat domains where C1 and C2 are the first and second cysteine residue of the repeat, respectively. Fucosylated repeats can then be further glycosylated by the addition of a beta-1,3-glucose residue by the glucosyltransferase, B3GALTL. Fucosylation mediates the efficient secretion of ADAMTS family members. Can also be C-glycosylated with one or two mannose molecules on tryptophan residues within the consensus sequence W-X-X-W of the TPRs, and N-glycosylated. These other glycosylations can also facilitate secretion. Expressed in skeletal muscle.

The protein resides in the secreted. The protein localises to the extracellular space. It localises to the extracellular matrix. Functionally, metalloproteinase that plays an important role in connective tissue organization, development, inflammation and cell migration. Extracellular matrix (ECM) degrading enzyme that shows proteolytic activity toward the hyalectan group of chondroitin sulfate proteoglycans (CSPGs) including ACAN, VCAN, BCAN and NCAN. Cleavage within the hyalectans occurs at Glu-Xaa recognition motifs. Plays a role in embryonic development, including limb and cardiac morphogenesis, and skeletal muscle development through its VCAN remodeling properties. Cleaves VCAN in the pericellular matrix surrounding myoblasts, facilitating myoblast contact and fusion which is required for skeletal muscle development and regeneration. Participates in the development of brown adipose tissue and browning of white adipose tissue. Plays an important role for T-lymphocyte migration from draining lymph nodes following viral infection. This Mus musculus (Mouse) protein is A disintegrin and metalloproteinase with thrombospondin motifs 5 (Adamts5).